Reading from the N-terminus, the 368-residue chain is Proton-coupled zinc antiporter SLC30A8 (368 aa).

The Cytoplasmic portion of the chain corresponds to 1–78 (MEFLERTYLV…AKWRLCAASA (78 aa)). Residues histidine 51, cysteine 52, and histidine 53 each coordinate Zn(2+). The HCH Motif; seals regulatory zinc-binding pocket motif lies at 51 to 53 (HCH). A helical transmembrane segment spans residues 79–99 (ICFFFMVAEVVGGHVAGSLAV). Residues 100–102 (LTD) are Lumenal, vesicle-facing. Residues 103–123 (AAHLLIDLTSFLLSLFSLWLS) traverse the membrane as a helical segment. Zn(2+)-binding residues include histidine 105 and aspartate 109. The Cytoplasmic segment spans residues 124-139 (SRPPSKRLTFGWYRAE). Residues 140–160 (ILGALLSVLCIWVVTGVLVYL) form a helical membrane-spanning segment. Residues 161 to 174 (ACERLLYPDYQIQA) lie on the Lumenal, vesicle side of the membrane. The chain crosses the membrane as a helical span at residues 175–195 (GIMITVSGCAVAANIVLTLIL). The Cytoplasmic segment spans residues 196 to 216 (HQRHLGHNHKDAQANASVRAA). The helical transmembrane segment at 217-237 (FVHALGDVFQSTSVLISALII) threads the bilayer. Zn(2+) is bound by residues histidine 219 and aspartate 223. At 238 to 245 (YFKPDYKM) the chain is on the lumenal, vesicle side. The helical transmembrane segment at 246-266 (ADPVCTFISSVLALASTVMIL) threads the bilayer. The Cytoplasmic segment spans residues 267-368 (KDFSILLMEG…SCLLCEDPQD (102 aa)). Zn(2+)-binding residues include histidine 300, histidine 317, histidine 344, glutamate 351, cysteine 360, and cysteine 363.

It belongs to the cation diffusion facilitator (CDF) transporter (TC 2.A.4) family. SLC30A subfamily. Homodimer. As to expression, expressed in endocrine pancreatic islet alpha and beta cells. May be more abundant in beta cells than in alpha cells. Expressed in cubical epithelium lining thyroid follicles (at protein level). In the adrenal gland, detected in the cortex, but not in the medulla (at protein level).

It is found in the cytoplasmic vesicle. Its subcellular location is the secretory vesicle membrane. The protein resides in the cell membrane. It catalyses the reaction Zn(2+)(in) + 2 H(+)(out) = Zn(2+)(out) + 2 H(+)(in). In terms of biological role, proton-coupled zinc ion antiporter mediating the entry of zinc into the lumen of pancreatic beta cell secretory granules, thereby regulating insulin secretion. This Rattus norvegicus (Rat) protein is Proton-coupled zinc antiporter SLC30A8.